The primary structure comprises 336 residues: Potassium channel subfamily K member 1 (336 aa).

The Cytoplasmic segment spans residues 1-20; that stretch reads MLQSLAGSSCVRLVERHRSA. The chain crosses the membrane as a helical span at residues 21–41; that stretch reads WCFGFLVLGYLLYLVFGAVVF. Over 42 to 103 the chain is Extracellular; the sequence is SSVELPYEDL…SNASGNWNWD (62 aa). N-linked (GlcNAc...) asparagine glycosylation occurs at N95. Residues 104–116 constitute an intramembrane region (helical); that stretch reads FTSALFFASTVLS. An intramembrane segment occupies 117 to 122; sequence TTGYGH. The tract at residues 117–122 is selectivity filter 1; the sequence is TTGYGH. Topologically, residues 123 to 132 are extracellular; sequence TVPLSDGGKA. A helical membrane pass occupies residues 133-156; the sequence is FCIIYSVIGIPFTLLFLTAVVQRV. At 157 to 181 the chain is on the cytoplasmic side; sequence TVHVTRRPVLYFHIRWGFSKQVVAI. Residues 182–202 traverse the membrane as a helical segment; it reads VHAVLLGFVTVSCFFFIPAAV. The Extracellular portion of the chain corresponds to 203–211; it reads FSVLEDDWN. An intramembrane region (helical) is located at residues 212–224; sequence FLESFYFCFISLS. The segment at 225-230 is selectivity filter 2; that stretch reads TIGLGD. The stretch at 225–231 is an intramembrane region; it reads TIGLGDY. At 232-243 the chain is on the extracellular side; the sequence is VPGEGYNQKFRE. A helical transmembrane segment spans residues 244-267; the sequence is LYKIGITCYLLLGLIAMLVVLETF. The Cytoplasmic segment spans residues 268 to 336; sequence CELHELKKFR…PPYEDGSANH (69 aa). K274 participates in a covalent cross-link: Glycyl lysine isopeptide (Lys-Gly) (interchain with G-Cter in SUMO). An important for intracellular retention in recycling endosomes region spans residues 293–299; the sequence is IMEHDQL. Positions 310–336 are disordered; the sequence is GLKEEQKQNEPFVASQSPPYEDGSANH. The residue at position 326 (S326) is a Phosphoserine.

The protein belongs to the two pore domain potassium channel (TC 1.A.1.8) family. Homodimer; disulfide-linked. Heterodimer with KCNK2; disulfide-linked. In astrocytes, forms mostly heterodimeric potassium channels with KCNK2, with only a minor proportion of functional channels containing homodimeric KCNK1. Interacts with KCNK3 and KCNK9, forming functional heterodimeric channels. Interacts with GNG4. Identified in a complex with PSD and ARF6; interacts only with PSD that is bound to ARF6. Interacts with UBE2I. Post-translationally, sumoylation is controversial. Sumoylated by UBE2I. Not sumoylated when expressed in xenopus oocytes or mammalian cells. Sumoylation inactivates the channel, but does not interfere with expression at the cell membrane. Sumoylation of a single subunit is sufficient to silence the dimeric channel. Sumoylation of KCNK1 is sufficient to silence heterodimeric channels formed by KCNK1 and KCNK3 or KCNK9. Desumoylated by SENP1; this activates the channel. Desumoylated by SENP1; this strongly increases halothane-mediated activation of heterodimeric channels formed with KCNK9. SENP1 treatment has no effect. Detected in brain and in kidney cortex and medulla, especially at the renal brush border membranes of the proximal convoluted tubules, in distal tubules and on intercalated cells of the collecting duct. Detected in cerebellum granule neurons. Detected in astrocytes in hippocampus stratum radiatum. Highly expressed in the stria vascularis in the cochlea. Detected in neurons in Scarpa's ganglion in the inner ear, at nerve terminals in the crista ampullaris, in supporting cells and dark cells, but not in hair cells (at protein level). Detected in the brain cerebellar granule cell layer, amygdala, thalamus reticular nucleus, habenula, mesencephalic trigeminal neurons, neocortex and piriform cortex, and at lower levels in the olfactory bulb. Detected in Scarpa's ganglia and crista ampullaris in the inner ear.

Its subcellular location is the cell membrane. The protein localises to the recycling endosome. The protein resides in the apical cell membrane. It is found in the cytoplasmic vesicle. It localises to the perikaryon. Its subcellular location is the cell projection. The protein localises to the dendrite. The protein resides in the synaptic cell membrane. It catalyses the reaction K(+)(in) = K(+)(out). The enzyme catalyses NH4(+)(in) = NH4(+)(out). It carries out the reaction Na(+)(in) = Na(+)(out). The catalysed reaction is Rb(+)(in) = Rb(+)(out). It catalyses the reaction Cs(+)(in) = Cs(+)(out). The enzyme catalyses Li(+)(in) = Li(+)(out). It carries out the reaction L-glutamate(out) = L-glutamate(in). The catalysed reaction is chloride(in) = chloride(out). Inhibited by 100 uM quinine. Slightly inhibited by Ba(+). Activity is first increased and then decreased when the extracellular pH is lowered to 6.0. Ion channel that contributes to passive transmembrane potassium transport and to the regulation of the resting membrane potential in brain astrocytes, but also in kidney and in other tissues. Forms dimeric channels through which potassium ions pass in accordance with their electrochemical gradient. The channel is selective for K(+) ions at physiological potassium concentrations and at neutral pH, but becomes permeable to Na(+) at subphysiological K(+) levels and upon acidification of the extracellular medium. The homodimer has very low potassium channel activity, when expressed in heterologous systems, and can function as weakly inward rectifying potassium channel. Channel activity is modulated by activation of serotonin receptors. Heterodimeric channels containing KCNK1 and KCNK2 have much higher activity, and may represent the predominant form in astrocytes. Heterodimeric channels containing KCNK1 and KCNK3 or KCNK9 have much higher activity. Heterodimeric channels formed by KCNK1 and KCNK9 may contribute to halothane-sensitive currents. Mediates outward rectifying potassium currents in dentate gyrus granule cells and contributes to the regulation of their resting membrane potential. Contributes to the regulation of action potential firing in dentate gyrus granule cells and down-regulates their intrinsic excitability. Contributes to the regulation of the resting membrane potential of pancreatic beta cells. In astrocytes, the heterodimer formed by KCNK1 and KCNK2 is required for rapid glutamate release in response to activation of G-protein coupled receptors, such as F2R and CNR1. Required for normal ion and water transport in the kidney. The low channel activity of homodimeric KCNK1 may be due to sumoylation. The low channel activity may be due to rapid internalization from the cell membrane and retention in recycling endosomes. Permeable to monovalent cations with ion selectivity for K(+) &gt; Rb(+) &gt;&gt; NH4(+) &gt;&gt; Cs(+) = Na(+) = Li(+). This Rattus norvegicus (Rat) protein is Potassium channel subfamily K member 1.